A 183-amino-acid polypeptide reads, in one-letter code: Large ribosomal subunit protein eL18 (183 aa).

The interval 150–183 (RHFGPAPGAPRSHTKPYVRTKGHEKARPSRRANV) is disordered.

This sequence belongs to the eukaryotic ribosomal protein eL18 family.

It is found in the cytoplasm. This chain is Large ribosomal subunit protein eL18 (RpL18), found in Bombyx mori (Silk moth).